Here is a 1329-residue protein sequence, read N- to C-terminus: GRB10-interacting GYF protein 2 (1329 aa).

Disordered regions lie at residues Arg-109–Pro-184 and Asn-236–Leu-419. Basic and acidic residues-rich tracts occupy residues Gly-150 to Asp-177 and Gly-251 to Gly-271. Residues Cys-293 to Gly-302 are compositionally biased toward acidic residues. Residues Arg-316–Glu-338 are compositionally biased toward basic and acidic residues. Residues Glu-339–Thr-351 are compositionally biased toward acidic residues. Residues Glu-352–Glu-376 show a composition bias toward basic and acidic residues. Residues Pro-377–Ala-397 show a composition bias toward low complexity. Residues His-403–Glu-415 show a composition bias toward basic and acidic residues. A GYF domain is found at Ala-556–Gly-604. Residues Gln-720 to Met-732 show a composition bias toward polar residues. 5 disordered regions span residues Gln-720–Trp-740, Leu-781–Ala-1081, Glu-1122–Val-1155, Ala-1236–Ser-1256, and Gln-1279–Ala-1302. A compositionally biased stretch (basic and acidic residues) spans Leu-781–Glu-896. The segment covering Ala-899–Gln-908 has biased composition (low complexity). Over residues Gln-909–Arg-928 the composition is skewed to basic and acidic residues. Positions Gln-929–Gln-951 are enriched in low complexity. Residues Leu-954–Thr-966 show a composition bias toward polar residues. The span at Ala-967 to Ala-980 shows a compositional bias: low complexity. A compositionally biased stretch (basic and acidic residues) spans Gln-983–Gln-1001. Residues Gln-1002–Gln-1013 are compositionally biased toward low complexity. Residues Ile-1035–Gln-1049 are compositionally biased toward basic and acidic residues. Over residues His-1068–Ala-1081 the composition is skewed to polar residues. Positions Asn-1239–Gln-1254 are enriched in low complexity.

The protein belongs to the GIGYF family. In terms of assembly, component of the 4EHP-GYF2 complex.

In terms of biological role, key component of the 4EHP-GYF2 complex, a multiprotein complex that acts as a repressor of translation initiation. In association with EIF4E2, assists ribosome-associated quality control (RQC) by sequestering the mRNA cap, blocking ribosome initiation and decreasing the translational load on problematic messages. This chain is GRB10-interacting GYF protein 2 (gigyf2), found in Danio rerio (Zebrafish).